The primary structure comprises 199 residues: Proteasome subunit beta type-2 (199 aa).

The protein belongs to the peptidase T1B family. As to quaternary structure, the 26S proteasome consists of a 20S proteasome core and two 19S regulatory subunits. The 20S proteasome core is composed of 28 subunits that are arranged in four stacked rings, resulting in a barrel-shaped structure. The two end rings are each formed by seven alpha subunits, and the two central rings are each formed by seven beta subunits. The catalytic chamber with the active sites is on the inside of the barrel.

Its subcellular location is the cytoplasm. The protein resides in the nucleus. Its function is as follows. Non-catalytic component of the proteasome, a multicatalytic proteinase complex which is characterized by its ability to cleave peptides with Arg, Phe, Tyr, Leu, and Glu adjacent to the leaving group at neutral or slightly basic pH. The proteasome has an ATP-dependent proteolytic activity. The chain is Proteasome subunit beta type-2 (pbs-4) from Caenorhabditis elegans.